The chain runs to 232 residues: Zinc-finger homeodomain protein 5 (232 aa).

Acidic residues predominate over residues 1–11; it reads MELSEHEEDAG. Residues 1 to 25 are disordered; sequence MELSEHEEDAGDVGGGCSSPPTPPH. Residues 40 to 86 form a ZF-HD dimerization-type; degenerate zinc finger; sequence YHECLRNHAAASGGHVVDGCGEFMPASTEEPLACAACGCHRSFHRRD. Positions 126–170 are disordered; it reads GLPFPGYGTPSGGTGTTTASSSDERLRPSPVQPRRRSRTTFTREQ. Positions 159–222 form a DNA-binding region, homeobox; sequence RRRSRTTFTR…NNKHSFKQKQ (64 aa).

Homo- and heterodimer with other ZFHD proteins.

The protein localises to the nucleus. In terms of biological role, putative transcription factor. The sequence is that of Zinc-finger homeodomain protein 5 (ZHD5) from Oryza sativa subsp. indica (Rice).